The sequence spans 806 residues: Leucine--tRNA ligase (806 aa).

Residues 40–51 (PYPSGTGLHVGH) carry the 'HIGH' region motif. Positions 576–580 (KMSKS) match the 'KMSKS' region motif. ATP is bound at residue K579.

It belongs to the class-I aminoacyl-tRNA synthetase family.

The protein resides in the cytoplasm. The catalysed reaction is tRNA(Leu) + L-leucine + ATP = L-leucyl-tRNA(Leu) + AMP + diphosphate. In Prosthecochloris aestuarii (strain DSM 271 / SK 413), this protein is Leucine--tRNA ligase.